The sequence spans 101 residues: Small nuclear ribonucleoprotein Sm D3 (101 aa).

In terms of domain architecture, Sm spans 6–78; the sequence is IPVKLLNEAQ…IKFIVVPDLL (73 aa).

The protein belongs to the snRNP core protein family. Component of the Sm core complex, present in spliceosomal snRNP U1, U2, U4/U6 and U5. The core complex contains SMB1, SMD1, SMD2, SMD3, SME1, SMX3 and SMX2 (Sm proteins B, D1, D2, D3, E, F and G, respectively), and is probably a heptameric ring structure. SMD3 specifically interacts with SMB1. Belongs to the CWC complex (or CEF1-associated complex), a spliceosome sub-complex reminiscent of a late-stage spliceosome composed of the U2, U5 and U6 snRNAs and at least BUD13, BUD31, BRR2, CDC40, CEF1, CLF1, CUS1, CWC2, CWC15, CWC21, CWC22, CWC23, CWC24, CWC25, CWC27, ECM2, HSH155, IST3, ISY1, LEA1, MSL1, NTC20, PRP8, PRP9, PRP11, PRP19, PRP21, PRP22, PRP45, PRP46, SLU7, SMB1, SMD1, SMD2, SMD3, SMX2, SMX3, SNT309, SNU114, SPP2, SYF1, SYF2, RSE1 and YJU2. Component of the U4/U6-U5 tri-snRNP complex composed of the U4, U6 and U5 snRNAs and at least PRP3, PRP4, PRP6, PRP8, PRP18, PRP31, PRP38, SNU13, SNU23, SNU66, SNU114, SPP381, SMB1, SMD1, SMD2, SMD3, SMX2, SMX3, LSM2, LSM3, LSM4, LSM5, LSM6, LSM7, LSM8, BRR2 and DIB1.

It is found in the cytoplasm. The protein resides in the cytosol. The protein localises to the nucleus. Functionally, plays a role in pre-mRNA splicing as a core component of the spliceosomal U1, U2, U4 and U5 small nuclear ribonucleoproteins (snRNPs), the building blocks of the spliceosome. Also binds telomerase RNA and is required for its accumulation. The protein is Small nuclear ribonucleoprotein Sm D3 (SMD3) of Saccharomyces cerevisiae (strain ATCC 204508 / S288c) (Baker's yeast).